The chain runs to 458 residues: Exodeoxyribonuclease 7 large subunit (458 aa).

The protein belongs to the XseA family. As to quaternary structure, heterooligomer composed of large and small subunits.

Its subcellular location is the cytoplasm. It catalyses the reaction Exonucleolytic cleavage in either 5'- to 3'- or 3'- to 5'-direction to yield nucleoside 5'-phosphates.. In terms of biological role, bidirectionally degrades single-stranded DNA into large acid-insoluble oligonucleotides, which are then degraded further into small acid-soluble oligonucleotides. This chain is Exodeoxyribonuclease 7 large subunit, found in Yersinia pseudotuberculosis serotype O:1b (strain IP 31758).